Consider the following 277-residue polypeptide: Phosphate import ATP-binding protein PstB (277 aa).

Positions isoleucine 31 to isoleucine 272 constitute an ABC transporter domain. ATP is bound at residue glycine 63 to serine 70.

It belongs to the ABC transporter superfamily. Phosphate importer (TC 3.A.1.7) family. As to quaternary structure, the complex is composed of two ATP-binding proteins (PstB), two transmembrane proteins (PstC and PstA) and a solute-binding protein (PstS).

The protein resides in the cell inner membrane. It carries out the reaction phosphate(out) + ATP + H2O = ADP + 2 phosphate(in) + H(+). Its function is as follows. Part of the ABC transporter complex PstSACB involved in phosphate import. Responsible for energy coupling to the transport system. The sequence is that of Phosphate import ATP-binding protein PstB from Pseudomonas fluorescens (strain Pf0-1).